Consider the following 129-residue polypeptide: Transcription antitermination protein NusB (129 aa).

This sequence belongs to the NusB family.

Its function is as follows. Involved in transcription antitermination. Required for transcription of ribosomal RNA (rRNA) genes. Binds specifically to the boxA antiterminator sequence of the ribosomal RNA (rrn) operons. This chain is Transcription antitermination protein NusB, found in Staphylococcus aureus (strain N315).